Reading from the N-terminus, the 555-residue chain is Urocanate hydratase (555 aa).

NAD(+)-binding positions include 52 to 53, Gln-130, 176 to 178, Glu-196, Arg-201, 242 to 243, 263 to 267, 272 to 273, and Tyr-321; these read GG, GMG, NA, QTSAH, and YL. The active site involves Cys-409. Gly-491 is a binding site for NAD(+).

It belongs to the urocanase family. The cofactor is NAD(+).

It localises to the cytoplasm. It catalyses the reaction 4-imidazolone-5-propanoate = trans-urocanate + H2O. The protein operates within amino-acid degradation; L-histidine degradation into L-glutamate; N-formimidoyl-L-glutamate from L-histidine: step 2/3. In terms of biological role, catalyzes the conversion of urocanate to 4-imidazolone-5-propionate. The sequence is that of Urocanate hydratase from Nocardioides sp. (strain ATCC BAA-499 / JS614).